A 216-amino-acid polypeptide reads, in one-letter code: Large ribosomal subunit protein uL3 (216 aa).

A disordered region spans residues Gly137–Pro158.

This sequence belongs to the universal ribosomal protein uL3 family. In terms of assembly, part of the 50S ribosomal subunit. Forms a cluster with proteins L14 and L19.

Functionally, one of the primary rRNA binding proteins, it binds directly near the 3'-end of the 23S rRNA, where it nucleates assembly of the 50S subunit. The polypeptide is Large ribosomal subunit protein uL3 (Pseudarthrobacter chlorophenolicus (strain ATCC 700700 / DSM 12829 / CIP 107037 / JCM 12360 / KCTC 9906 / NCIMB 13794 / A6) (Arthrobacter chlorophenolicus)).